The chain runs to 310 residues: Beta sliding clamp (310 aa).

The protein belongs to the beta sliding clamp family. In terms of assembly, forms a ring-shaped head-to-tail homodimer around DNA which binds and tethers DNA polymerases and other proteins to the DNA. The DNA replisome complex has a single clamp-loading complex (3 tau and 1 each of delta, delta', psi and chi subunits) which binds 3 Pol III cores (1 core on the leading strand and 2 on the lagging strand) each with a beta sliding clamp dimer. Additional proteins in the replisome are other copies of gamma, psi and chi, Ssb, DNA helicase and RNA primase.

The protein resides in the cytoplasm. Its function is as follows. Confers DNA tethering and processivity to DNA polymerases and other proteins. Acts as a clamp, forming a ring around DNA (a reaction catalyzed by the clamp-loading complex) which diffuses in an ATP-independent manner freely and bidirectionally along dsDNA. Initially characterized for its ability to contact the catalytic subunit of DNA polymerase III (Pol III), a complex, multichain enzyme responsible for most of the replicative synthesis in bacteria; Pol III exhibits 3'-5' exonuclease proofreading activity. The beta chain is required for initiation of replication as well as for processivity of DNA replication. This chain is Beta sliding clamp (dnaN), found in Micrococcus luteus (Micrococcus lysodeikticus).